A 173-amino-acid polypeptide reads, in one-letter code: C-phycocyanin beta subunit (173 aa).

Residue asparagine 73 is modified to N4-methylasparagine. Cysteine 83 and cysteine 154 together coordinate (2R,3E)-phycocyanobilin.

The protein belongs to the phycobiliprotein family. Heterodimer of an alpha and a beta subunit. Heterodimers further assemble into trimers and the trimers into hexamers. Post-translationally, contains two covalently linked bilin chromophores.

It is found in the cellular thylakoid membrane. Functionally, light-harvesting photosynthetic bile pigment-protein from the phycobiliprotein complex (phycobilisome, PBS). Phycocyanin is the major phycobiliprotein in the PBS rod. The sequence is that of C-phycocyanin beta subunit (cpcB) from Mastigocladus laminosus (Fischerella sp.).